Consider the following 893-residue polypeptide: Protein translocase subunit SecA (893 aa).

Residues Gln-87, 105–109 (GEGKT), and Asp-512 contribute to the ATP site. The span at 840 to 849 (VEEQHRKSEE) shows a compositional bias: basic and acidic residues. Residues 840 to 893 (VEEQHRKSEEVPMDFQHQSASSPSEQAQTPRVGRNEPCPCGSGKKYKQCHGKLA) form a disordered region. A compositionally biased stretch (polar residues) spans 855-868 (QHQSASSPSEQAQT). Zn(2+) is bound by residues Cys-877, Cys-879, Cys-888, and His-889. Residues 883 to 893 (KKYKQCHGKLA) show a composition bias toward basic residues.

This sequence belongs to the SecA family. In terms of assembly, monomer and homodimer. Part of the essential Sec protein translocation apparatus which comprises SecA, SecYEG and auxiliary proteins SecDF-YajC and YidC. The cofactor is Zn(2+).

The protein resides in the cell inner membrane. The protein localises to the cytoplasm. It carries out the reaction ATP + H2O + cellular proteinSide 1 = ADP + phosphate + cellular proteinSide 2.. Part of the Sec protein translocase complex. Interacts with the SecYEG preprotein conducting channel. Has a central role in coupling the hydrolysis of ATP to the transfer of proteins into and across the cell membrane, serving both as a receptor for the preprotein-SecB complex and as an ATP-driven molecular motor driving the stepwise translocation of polypeptide chains across the membrane. In Colwellia psychrerythraea (strain 34H / ATCC BAA-681) (Vibrio psychroerythus), this protein is Protein translocase subunit SecA.